Reading from the N-terminus, the 142-residue chain is Myosin-2 essential light chain (142 aa).

2 consecutive EF-hand domains span residues 2 to 37 (DDLA…LGQN) and 75 to 110 (HTVE…LGER).

As to quaternary structure, myosin is a hexamer of 2 heavy chains and 4 light chains (two regulatory light chains and two essential light chains).

Its subcellular location is the cytoplasm. It is found in the cytoskeleton. Its function is as follows. Required for cytokinesis and embryo elongation. May regulate myosin II complex formation and/or the association of myosin with actin. May be involved in the organization of mlc-4 and nmy-2 into bundles. The sequence is that of Myosin-2 essential light chain from Caenorhabditis elegans.